A 372-amino-acid chain; its full sequence is Queuine tRNA-ribosyltransferase (372 aa).

D92 acts as the Proton acceptor in catalysis. Substrate contacts are provided by residues 92-96 (DSGGY), D146, Q188, and G215. The RNA binding stretch occupies residues 246-252 (GIGSLRE). D265 (nucleophile) is an active-site residue. The RNA binding; important for wobble base 34 recognition stretch occupies residues 270–274 (TRLGR). Zn(2+) contacts are provided by C303, C305, C308, and H334.

This sequence belongs to the queuine tRNA-ribosyltransferase family. As to quaternary structure, homodimer. Within each dimer, one monomer is responsible for RNA recognition and catalysis, while the other monomer binds to the replacement base PreQ1. Zn(2+) serves as cofactor.

The enzyme catalyses 7-aminomethyl-7-carbaguanine + guanosine(34) in tRNA = 7-aminomethyl-7-carbaguanosine(34) in tRNA + guanine. Its pathway is tRNA modification; tRNA-queuosine biosynthesis. Its function is as follows. Catalyzes the base-exchange of a guanine (G) residue with the queuine precursor 7-aminomethyl-7-deazaguanine (PreQ1) at position 34 (anticodon wobble position) in tRNAs with GU(N) anticodons (tRNA-Asp, -Asn, -His and -Tyr). Catalysis occurs through a double-displacement mechanism. The nucleophile active site attacks the C1' of nucleotide 34 to detach the guanine base from the RNA, forming a covalent enzyme-RNA intermediate. The proton acceptor active site deprotonates the incoming PreQ1, allowing a nucleophilic attack on the C1' of the ribose to form the product. After dissociation, two additional enzymatic reactions on the tRNA convert PreQ1 to queuine (Q), resulting in the hypermodified nucleoside queuosine (7-(((4,5-cis-dihydroxy-2-cyclopenten-1-yl)amino)methyl)-7-deazaguanosine). In Prochlorococcus marinus subsp. pastoris (strain CCMP1986 / NIES-2087 / MED4), this protein is Queuine tRNA-ribosyltransferase.